A 40-amino-acid polypeptide reads, in one-letter code: MKVRASLKSLKDKDGSQVVRRRGKLYVVNKRNPRWKGRQG.

Belongs to the bacterial ribosomal protein bL36 family.

The chain is Large ribosomal subunit protein bL36A from Saccharopolyspora erythraea (strain ATCC 11635 / DSM 40517 / JCM 4748 / NBRC 13426 / NCIMB 8594 / NRRL 2338).